A 541-amino-acid polypeptide reads, in one-letter code: Calcium-dependent protein kinase 25 (541 aa).

A compositionally biased stretch (gly residues) spans 1–11 (MGQCCTGGGKA). The segment at 1–74 (MGQCCTGGGK…AGPIGEVLER (74 aa)) is disordered. The N-myristoyl glycine moiety is linked to residue Gly2. The span at 38–67 (AKQQPCSPAAKAAATEAAAAASSSKKPAGP) shows a compositional bias: low complexity. The 259-residue stretch at 83–341 (YSIGKELGRG…AFQVLNHPWI (259 aa)) folds into the Protein kinase domain. ATP-binding positions include 89-97 (LGRGQFGVT) and Lys112. Asp207 serves as the catalytic Proton acceptor. The tract at residues 347–377 (APDVPLDNVVLNRLKQFRAMNQFKKAALRII) is autoinhibitory domain. 4 EF-hand domains span residues 384-419 (EEIKGLKEMFKNIDKDNSGTITLEELKNGLAKQGTK), 420-455 (FSDNEIEQLMEAADADGNGIIDYEEFVTATVHMNKM), 456-491 (DREEHLYTAFQYFDKDNSGYITKEELEQALKEQGLY), and 493-526 (ANEIKDVITDADSNNDGRIDYSEFVAMMRKGSGC). Ca(2+) is bound by residues Asp397, Asp399, Ser401, Thr403, Glu408, Asp433, Asp435, Asn437, Glu444, Asp469, Asp471, Ser473, Tyr475, Glu480, Asp504, Asn506, Asp508, Arg510, and Glu515.

It belongs to the protein kinase superfamily. Ser/Thr protein kinase family. CDPK subfamily. As to expression, specifically expressed in heading panicles, spikelets and mature pollen grains. Not expressed in vegetative tissues.

The protein resides in the membrane. The enzyme catalyses L-seryl-[protein] + ATP = O-phospho-L-seryl-[protein] + ADP + H(+). It catalyses the reaction L-threonyl-[protein] + ATP = O-phospho-L-threonyl-[protein] + ADP + H(+). Its activity is regulated as follows. Activated by calcium. Autophosphorylation may play an important role in the regulation of the kinase activity. May play a role in signal transduction pathways that involve calcium as a second messenger. This Oryza sativa subsp. japonica (Rice) protein is Calcium-dependent protein kinase 25.